The chain runs to 205 residues: Putative 3-methyladenine DNA glycosylase (205 aa).

The protein belongs to the DNA glycosylase MPG family.

This Bacillus cereus (strain B4264) protein is Putative 3-methyladenine DNA glycosylase.